Reading from the N-terminus, the 140-residue chain is Gas vesicle protein O (140 aa).

The segment covering 1-14 (MSDQGNEHANHDGI) has biased composition (basic and acidic residues). The tract at residues 1–61 (MSDQGNEHAN…DSTIGLSDAQ (61 aa)) is disordered. Over residues 39–56 (QTASDEAVSNQSPDSTIG) the composition is skewed to polar residues.

This sequence belongs to the gas vesicle GvpO family. Forms homodimers, forms a GvpN-GvpO heterodimer, interacts with GvpC, GvpF, GvpI and GvpL, might interact with GvpA.

It localises to the gas vesicle. It is found in the cytoplasm. A minor component of the gas vesicle (GV), may play a role in transcription and/or RNA stability and/or in GV assembly. Gas vesicles are small, hollow, gas filled protein structures found in some microorganisms. They allow positioning of halobacteria at the optimal depth for growth in the poorly aerated shallow brine pools of their habitat. In terms of biological role, expression of a 9.5 kb mc-vac DNA fragment containing 2 divergently transcribed regions (gvpD-gvpE-gvpF-gvpG-gvpH-gvpI-gvpJ-gvpK-gvpL-gvpM and gvpA-gvpC-gvpN-gvpO) allows H.volcanii to produce gas vesicles. The sequence is that of Gas vesicle protein O from Haloferax mediterranei (strain ATCC 33500 / DSM 1411 / JCM 8866 / NBRC 14739 / NCIMB 2177 / R-4) (Halobacterium mediterranei).